We begin with the raw amino-acid sequence, 289 residues long: Zinc finger matrin-type protein 3 (289 aa).

The disordered stretch occupies residues 1 to 59 (MILLQHAGLPPPKRPSSSPPMSVAARSTGALQLPPQKPFGQEASLPLAGEEEPPKGGEQ). Over residues 9–18 (LPPPKRPSSS) the composition is skewed to pro residues. 2 consecutive Matrin-type zinc fingers follow at residues 70–100 (LYCK…KLRN) and 147–177 (DYCK…RLRL). Polar residues predominate over residues 180–191 (AQSNSFSDSSEV). The segment at 180–200 (AQSNSFSDSSEVGQRRTRKEG) is disordered. The Matrin-type 3 zinc-finger motif lies at 246–276 (FYCSMCNVGAGEEVEFRQHLESKQHKSKVSE).

Interacts with dsRNA.

It localises to the nucleus. The protein resides in the nucleolus. Functionally, acts as a bona fide target gene of p53/TP53. May play a role in the TP53-dependent growth regulatory pathway. May contribute to TP53-mediated apoptosis by regulation of TP53 expression and translocation to the nucleus and nucleolus. This chain is Zinc finger matrin-type protein 3, found in Bos taurus (Bovine).